Reading from the N-terminus, the 301-residue chain is MAKPLTITSSHSHFSLAWRAYFEMTKPKVVALMLLTVLVGMCLAVPTAVPVQPLIAGMFGIALMAGSAAALNHLIDRRIDGMMARTYNRPLPKGRVSAKRALIFAASIGGLGFVVLYVLVNPLTAWLTFASLIGYALVYTAYLKRATSQNIVIGGLAGAMPPLLGWTAVTNQFHGHALLLVIIIFTWTPPHFWALAIHRRAEYAKVDIPMLPVTHGVEFTKTCILLYTVLLAIACLLPVLVGMCGPMYFVCSSLLSSVFIYKAWQLKYRDHDGLAMQVFRFSIYHLMLLFMALLIDHYLWS.

A run of 9 helical transmembrane segments spans residues V29–V49, V51–L71, A101–N121, L123–L143, N150–T170, A177–I197, C223–M243, C244–W264, and F281–S301.

This sequence belongs to the UbiA prenyltransferase family. Protoheme IX farnesyltransferase subfamily.

It is found in the cell inner membrane. It carries out the reaction heme b + (2E,6E)-farnesyl diphosphate + H2O = Fe(II)-heme o + diphosphate. It participates in porphyrin-containing compound metabolism; heme O biosynthesis; heme O from protoheme: step 1/1. In terms of biological role, converts heme B (protoheme IX) to heme O by substitution of the vinyl group on carbon 2 of heme B porphyrin ring with a hydroxyethyl farnesyl side group. The polypeptide is Protoheme IX farnesyltransferase 2 (Shewanella sp. (strain W3-18-1)).